The sequence spans 279 residues: MVWFKRVKPSIRTTDKRDVPEGLWWKCEECGAMIHKKQLEDHVYTCSDCGYHFRISPYRYFSILFDNDTYQEFDDALRAGDPLGFTDTKKYSDRVHDTIGKSGKTEACRNAWGEVGGNPLVVSAMDFGFIGGSMGSVVGEKISRAVDKAVELNAPLLVISQSGGARMMEGAFSLMQMAKTSARLTLLSEKRLPFFSLMTDPTMGGITASFAMLGDVNLSEPKALIGFAGPRVIRDTIKRDLPEGFQRAEFLHEQGFVDCIVHRKELKSQIVRLAGMLKV.

The CoA carboxyltransferase N-terminal domain occupies 23 to 279 (LWWKCEECGA…IVRLAGMLKV (257 aa)). Residues Cys27, Cys30, Cys46, and Cys49 each coordinate Zn(2+). Residues 27–49 (CEECGAMIHKKQLEDHVYTCSDC) form a C4-type zinc finger.

It belongs to the AccD/PCCB family. As to quaternary structure, acetyl-CoA carboxylase is a heterohexamer composed of biotin carboxyl carrier protein (AccB), biotin carboxylase (AccC) and two subunits each of ACCase subunit alpha (AccA) and ACCase subunit beta (AccD). The cofactor is Zn(2+).

It localises to the cytoplasm. It catalyses the reaction N(6)-carboxybiotinyl-L-lysyl-[protein] + acetyl-CoA = N(6)-biotinyl-L-lysyl-[protein] + malonyl-CoA. It functions in the pathway lipid metabolism; malonyl-CoA biosynthesis; malonyl-CoA from acetyl-CoA: step 1/1. Its function is as follows. Component of the acetyl coenzyme A carboxylase (ACC) complex. Biotin carboxylase (BC) catalyzes the carboxylation of biotin on its carrier protein (BCCP) and then the CO(2) group is transferred by the transcarboxylase to acetyl-CoA to form malonyl-CoA. This Chlorobium limicola (strain DSM 245 / NBRC 103803 / 6330) protein is Acetyl-coenzyme A carboxylase carboxyl transferase subunit beta.